The chain runs to 361 residues: Histidinol-phosphate aminotransferase (361 aa).

K224 is modified (N6-(pyridoxal phosphate)lysine).

It belongs to the class-II pyridoxal-phosphate-dependent aminotransferase family. Histidinol-phosphate aminotransferase subfamily. In terms of assembly, homodimer. Requires pyridoxal 5'-phosphate as cofactor.

The enzyme catalyses L-histidinol phosphate + 2-oxoglutarate = 3-(imidazol-4-yl)-2-oxopropyl phosphate + L-glutamate. It participates in amino-acid biosynthesis; L-histidine biosynthesis; L-histidine from 5-phospho-alpha-D-ribose 1-diphosphate: step 7/9. The polypeptide is Histidinol-phosphate aminotransferase (Limosilactobacillus fermentum (strain NBRC 3956 / LMG 18251) (Lactobacillus fermentum)).